Here is a 114-residue protein sequence, read N- to C-terminus: Cytochrome c oxidase subunit 4B (114 aa).

3 helical membrane passes run 29-49, 56-76, and 89-109; these read QIVVFALMIFLTLMSFMAVAT, FAIPFIFILAVIQFALQLFFF, and AFMISGIFITVPTIAALMLLL.

It belongs to the cytochrome c oxidase bacterial subunit 4 family.

It localises to the cell membrane. It carries out the reaction 4 Fe(II)-[cytochrome c] + O2 + 8 H(+)(in) = 4 Fe(III)-[cytochrome c] + 2 H2O + 4 H(+)(out). The chain is Cytochrome c oxidase subunit 4B (ctaF) from Alkalihalophilus pseudofirmus (strain ATCC BAA-2126 / JCM 17055 / OF4) (Bacillus pseudofirmus).